The chain runs to 344 residues: Tetraacyldisaccharide 4'-kinase (344 aa).

An ATP-binding site is contributed by 65 to 72 (HAGGTGKT).

It belongs to the LpxK family.

The catalysed reaction is a lipid A disaccharide + ATP = a lipid IVA + ADP + H(+). It participates in glycolipid biosynthesis; lipid IV(A) biosynthesis; lipid IV(A) from (3R)-3-hydroxytetradecanoyl-[acyl-carrier-protein] and UDP-N-acetyl-alpha-D-glucosamine: step 6/6. Transfers the gamma-phosphate of ATP to the 4'-position of a tetraacyldisaccharide 1-phosphate intermediate (termed DS-1-P) to form tetraacyldisaccharide 1,4'-bis-phosphate (lipid IVA). This Neisseria meningitidis serogroup A / serotype 4A (strain DSM 15465 / Z2491) protein is Tetraacyldisaccharide 4'-kinase.